We begin with the raw amino-acid sequence, 38 residues long: Small ribosomal subunit protein uS12c (38 aa).

A disordered region spans residues 1 to 26; sequence MPTIQQLIRNARQPIENRKKSPALRG.

This sequence belongs to the universal ribosomal protein uS12 family. Part of the 30S ribosomal subunit.

It localises to the plastid. The protein localises to the chloroplast. Functionally, with S4 and S5 plays an important role in translational accuracy. Located at the interface of the 30S and 50S subunits. The chain is Small ribosomal subunit protein uS12c (rps12) from Pinus contorta (Shore pine).